The primary structure comprises 366 residues: UDP-N-acetylglucosamine--N-acetylmuramyl-(pentapeptide) pyrophosphoryl-undecaprenol N-acetylglucosamine transferase (366 aa).

UDP-N-acetyl-alpha-D-glucosamine-binding positions include 10–12, N124, R166, S196, and Q297; that span reads TGG.

It belongs to the glycosyltransferase 28 family. MurG subfamily.

Its subcellular location is the cell membrane. It catalyses the reaction di-trans,octa-cis-undecaprenyl diphospho-N-acetyl-alpha-D-muramoyl-L-alanyl-D-glutamyl-meso-2,6-diaminopimeloyl-D-alanyl-D-alanine + UDP-N-acetyl-alpha-D-glucosamine = di-trans,octa-cis-undecaprenyl diphospho-[N-acetyl-alpha-D-glucosaminyl-(1-&gt;4)]-N-acetyl-alpha-D-muramoyl-L-alanyl-D-glutamyl-meso-2,6-diaminopimeloyl-D-alanyl-D-alanine + UDP + H(+). Its pathway is cell wall biogenesis; peptidoglycan biosynthesis. Its function is as follows. Cell wall formation. Catalyzes the transfer of a GlcNAc subunit on undecaprenyl-pyrophosphoryl-MurNAc-pentapeptide (lipid intermediate I) to form undecaprenyl-pyrophosphoryl-MurNAc-(pentapeptide)GlcNAc (lipid intermediate II). The chain is UDP-N-acetylglucosamine--N-acetylmuramyl-(pentapeptide) pyrophosphoryl-undecaprenol N-acetylglucosamine transferase from Alkaliphilus metalliredigens (strain QYMF).